The chain runs to 417 residues: Cobalamin binding intrinsic factor (417 aa).

Residues 1-18 form the signal peptide; that stretch reads MAWLSFYLLNVLWAVAGT. 3 cysteine pairs are disulfide-bonded: cysteine 26-cysteine 246, cysteine 103-cysteine 288, and cysteine 143-cysteine 182. Aspartate 171 is a cob(II)alamin binding site. A Phosphoserine modification is found at serine 191. N-linked (GlcNAc...) asparagine glycosylation is present at asparagine 209. Residues aspartate 222 and glutamine 270 each coordinate cob(II)alamin. N-linked (GlcNAc...) asparagine glycosylation is found at asparagine 311 and asparagine 330. Residues 365–370 and 386–395 contribute to the cob(II)alamin site; these read SWGLIV and WEFLSGKTPL. A glycan (N-linked (GlcNAc...) asparagine) is linked at asparagine 413.

Belongs to the eukaryotic cobalamin transport proteins family. In terms of assembly, interacts with CUBN (via CUB domains). Post-translationally, the N-terminus is blocked. In terms of tissue distribution, gastric mucosa.

It is found in the secreted. Promotes absorption of the essential vitamin cobalamin (Cbl) in the ileum. After interaction with CUBN, the CBLIF-cobalamin complex is internalized via receptor-mediated endocytosis. The polypeptide is Cobalamin binding intrinsic factor (Rattus norvegicus (Rat)).